The chain runs to 481 residues: UDP-glucose 6-dehydrogenase 1 (481 aa).

NAD(+) contacts are provided by residues 8–13 (GAGYVG), D33, R38, 86–90 (VNTPT), 127–128 (ST), and E161. Residues 157–161 (EFLAE), 216–223 (KLAANAFL), and 256–269 (RIGPKFLNASVGFG) contribute to the substrate site. The active-site Nucleophile is the C272. 272-275 (CFQK) contacts NAD(+). Substrate is bound at residue 334 to 335 (FK). Residue R342 coordinates NAD(+). A substrate-binding site is contributed by R448.

It belongs to the UDP-glucose/GDP-mannose dehydrogenase family.

It carries out the reaction UDP-alpha-D-glucose + 2 NAD(+) + H2O = UDP-alpha-D-glucuronate + 2 NADH + 3 H(+). It functions in the pathway nucleotide-sugar biosynthesis; UDP-alpha-D-glucuronate biosynthesis; UDP-alpha-D-glucuronate from UDP-alpha-D-glucose: step 1/1. Its activity is regulated as follows. Inhibited by UDP-xylose. Functionally, involved in the biosynthesis of UDP-glucuronic acid (UDP-GlcA), providing nucleotide sugars for cell-wall polymers. The protein is UDP-glucose 6-dehydrogenase 1 (UGD1) of Arabidopsis thaliana (Mouse-ear cress).